We begin with the raw amino-acid sequence, 669 residues long: DNA ligase 2 (669 aa).

Residues 35-39 (DKEYD) and 83-84 (SL) contribute to the NAD(+) site. Residue Lys-125 is the N6-AMP-lysine intermediate of the active site. NAD(+)-binding residues include Arg-147, Glu-181, and Lys-317. Zn(2+) is bound by residues Cys-410, Cys-413, Cys-426, and Cys-432. The BRCT domain maps to 590 to 669 (VVENAFTGKT…EEFEQLINNM (80 aa)).

Belongs to the NAD-dependent DNA ligase family. LigA subfamily. It depends on Mg(2+) as a cofactor. Mn(2+) is required as a cofactor.

The catalysed reaction is NAD(+) + (deoxyribonucleotide)n-3'-hydroxyl + 5'-phospho-(deoxyribonucleotide)m = (deoxyribonucleotide)n+m + AMP + beta-nicotinamide D-nucleotide.. Its function is as follows. DNA ligase that catalyzes the formation of phosphodiester linkages between 5'-phosphoryl and 3'-hydroxyl groups in double-stranded DNA using NAD as a coenzyme and as the energy source for the reaction. It is essential for DNA replication and repair of damaged DNA. This Clostridium acetobutylicum (strain ATCC 824 / DSM 792 / JCM 1419 / IAM 19013 / LMG 5710 / NBRC 13948 / NRRL B-527 / VKM B-1787 / 2291 / W) protein is DNA ligase 2.